Reading from the N-terminus, the 314-residue chain is Serine/threonine-protein phosphatase PP2A-5 catalytic subunit (314 aa).

The Mn(2+) site is built by aspartate 62, histidine 64, aspartate 90, and asparagine 122. The active-site Proton donor is the histidine 123. Mn(2+) contacts are provided by histidine 172 and histidine 246.

Belongs to the PPP phosphatase family. PP-2A subfamily. It depends on Mn(2+) as a cofactor.

It localises to the cytoplasm. The catalysed reaction is O-phospho-L-seryl-[protein] + H2O = L-seryl-[protein] + phosphate. It carries out the reaction O-phospho-L-threonyl-[protein] + H2O = L-threonyl-[protein] + phosphate. This chain is Serine/threonine-protein phosphatase PP2A-5 catalytic subunit (NPP5), found in Nicotiana tabacum (Common tobacco).